A 4450-amino-acid polypeptide reads, in one-letter code: Gramicidin S synthase 2 (4450 aa).

The domain 1 (proline-activating) stretch occupies residues 467-1044 (DKTIHQLFTE…IQEISNYING (578 aa)). Carrier domains lie at 971–1046 (VPTN…NGAK), 2006–2081 (APSS…ADGE), 3051–3126 (APRT…EETD), and 4089–4164 (APRN…THQE). 4 positions are modified to O-(pantetheine 4'-phosphoryl)serine: S1006, S2041, S3086, and S4124. The tract at residues 1521-2080 (DHVAVGWKDQ…SALAQYIADG (560 aa)) is domain 2 (valine-activating). A domain 3 (ornithine-activating) region spans residues 2538 to 3134 (YATNKIFHEL…TDTEQYMAIQ (597 aa)). A domain 4 (leucine-activating) region spans residues 3590-4172 (IQELFEEQVK…QESENNVHQP (583 aa)).

It belongs to the ATP-dependent AMP-binding enzyme family. In terms of assembly, large multienzyme complex of GrsA and GrsB. It depends on pantetheine 4'-phosphate as a cofactor.

The protein operates within antibiotic biosynthesis; gramicidin S biosynthesis. Its function is as follows. This protein is a multifunctional enzyme, able to activate and polymerize the amino acids Pro, Val, Orn and Leu. Activation sites for these AA consist of individual domains. The chain is Gramicidin S synthase 2 (grsB) from Brevibacillus brevis (Bacillus brevis).